We begin with the raw amino-acid sequence, 134 residues long: Putative cytochrome c oxidase subunit 6b-like (134 aa).

The interval 1 to 61 (MSSAQMDPHD…DSGRETDAAV (61 aa)) is disordered. 2 stretches are compositionally biased toward basic and acidic residues: residues 7-19 (DPHD…DISK) and 44-61 (ATFR…DAAV). A CHCH domain is found at 71 to 114 (TRHCFNRFMQYHKCIEKNGRDANDCNNLRDYVRSICPEELVSKI). Residues 74–84 (CFNRFMQYHKC) carry the Cx9C motif motif. Intrachain disulfides connect Cys-74-Cys-106 and Cys-84-Cys-95. The Cx10C motif motif lies at 95–106 (CNNLRDYVRSIC).

Belongs to the cytochrome c oxidase subunit 6B (TC 3.D.4.8) family.

The protein resides in the mitochondrion. In terms of biological role, this protein is one of the nuclear-coded polypeptide chains of cytochrome c oxidase, the terminal oxidase in mitochondrial electron transport. This protein may be one of the heme-binding subunits of the oxidase. This chain is Putative cytochrome c oxidase subunit 6b-like, found in Arabidopsis thaliana (Mouse-ear cress).